The primary structure comprises 413 residues: Putative F-box protein At3g23970 (413 aa).

An F-box domain is found at 1–42; that stretch reads MNIPPELTFEVLVRLPLKSLARFRSVRKEWKLVIDSEFFRDC.

In Arabidopsis thaliana (Mouse-ear cress), this protein is Putative F-box protein At3g23970.